The following is a 303-amino-acid chain: Acetaldehyde dehydrogenase (303 aa).

C131 (acyl-thioester intermediate) is an active-site residue. Residues 162 to 170 (SVGPGTRAN) and N273 contribute to the NAD(+) site.

The protein belongs to the acetaldehyde dehydrogenase family.

The catalysed reaction is acetaldehyde + NAD(+) + CoA = acetyl-CoA + NADH + H(+). This chain is Acetaldehyde dehydrogenase, found in Marinomonas sp. (strain MWYL1).